A 130-amino-acid polypeptide reads, in one-letter code: Large ribosomal subunit protein bL17 (130 aa).

It belongs to the bacterial ribosomal protein bL17 family. As to quaternary structure, part of the 50S ribosomal subunit. Contacts protein L32.

The polypeptide is Large ribosomal subunit protein bL17 (Nitrosomonas europaea (strain ATCC 19718 / CIP 103999 / KCTC 2705 / NBRC 14298)).